The primary structure comprises 331 residues: D-alanine--D-alanine ligase (331 aa).

In terms of domain architecture, ATP-grasp spans 116–316 (KRQWQTHGLP…YEDFVLQLAA (201 aa)). 142-197 (ADRLGLPLIVKPAREGSSIGLTKVTSVAELPAAYEKAARLDRDVMAEQFIEGDELT) lines the ATP pocket. Mg(2+) contacts are provided by D269, E283, and N285.

Belongs to the D-alanine--D-alanine ligase family. Mg(2+) serves as cofactor. Requires Mn(2+) as cofactor.

It localises to the cytoplasm. It catalyses the reaction 2 D-alanine + ATP = D-alanyl-D-alanine + ADP + phosphate + H(+). The protein operates within cell wall biogenesis; peptidoglycan biosynthesis. In terms of biological role, cell wall formation. The protein is D-alanine--D-alanine ligase of Ralstonia pickettii (strain 12J).